Here is a 724-residue protein sequence, read N- to C-terminus: Propionyl-CoA carboxylase alpha chain, mitochondrial (724 aa).

Residues 48-495 (KFDKILIANR…TTKYLPEVYP (448 aa)) form the Biotin carboxylation domain. ATP-binding positions include Lys-163, 195–256 (SRDI…PRHI), Glu-247, and Asn-282. Residues 167–364 (KKIATAARVS…IVQQMLRVSY (198 aa)) form the ATP-grasp domain. Mg(2+)-binding residues include Glu-322, Glu-335, and Asn-337. 3 residues coordinate Mn(2+): Glu-322, Glu-335, and Asn-337. Residue Arg-339 is part of the active site. Phe-395 serves as a coordination point for biotin. The 76-residue stretch at 649 to 724 (KAKVDLSTVV…DEGEVLVELE (76 aa)) folds into the Biotinyl-binding domain. Lys-690 bears the N6-biotinyllysine mark.

In terms of assembly, the holoenzyme is a dodecamer composed of 6 alpha subunits and 6 beta subunits. Interacts with sir-2.2 and sir-2.3. Biotin serves as cofactor. Mg(2+) is required as a cofactor. It depends on Mn(2+) as a cofactor. In terms of processing, the biotin cofactor is covalently attached to the C-terminal biotinyl-binding domain and is required for the catalytic activity.

It localises to the mitochondrion matrix. It catalyses the reaction propanoyl-CoA + hydrogencarbonate + ATP = (S)-methylmalonyl-CoA + ADP + phosphate + H(+). It carries out the reaction butanoyl-CoA + hydrogencarbonate + ATP = (2S)-ethylmalonyl-CoA + ADP + phosphate + H(+). Its pathway is metabolic intermediate metabolism; propanoyl-CoA degradation; succinyl-CoA from propanoyl-CoA: step 1/3. In terms of biological role, this is one of the 2 subunits of the biotin-dependent propionyl-CoA carboxylase (PCC), a mitochondrial enzyme involved in the catabolism of odd chain fatty acids, branched-chain amino acids isoleucine, threonine, methionine, and valine and other metabolites. Propionyl-CoA carboxylase catalyzes the carboxylation of propionyl-CoA/propanoyl-CoA to D-methylmalonyl-CoA/(S)-methylmalonyl-CoA. Within the holoenzyme, the alpha subunit catalyzes the ATP-dependent carboxylation of the biotin carried by the biotin carboxyl carrier (BCC) domain, while the beta subunit then transfers the carboxyl group from carboxylated biotin to propionyl-CoA. Propionyl-CoA carboxylase also significantly acts on butyryl-CoA/butanoyl-CoA, which is converted to ethylmalonyl-CoA/(2S)-ethylmalonyl-CoA. Other alternative minor substrates include (2E)-butenoyl-CoA/crotonoyl-CoA. This is Propionyl-CoA carboxylase alpha chain, mitochondrial (pcca-1) from Caenorhabditis elegans.